Reading from the N-terminus, the 201-residue chain is Probable thymidylate kinase (201 aa).

ATP is bound at residue 10–17; it reads GIDGSGKS.

Belongs to the thymidylate kinase family.

It carries out the reaction dTMP + ATP = dTDP + ADP. The chain is Probable thymidylate kinase from Methanococcoides burtonii (strain DSM 6242 / NBRC 107633 / OCM 468 / ACE-M).